We begin with the raw amino-acid sequence, 324 residues long: Biotin synthase (324 aa).

The Radical SAM core domain occupies 43–273 (FCGNYFNFCS…HVFLRLAGGR (231 aa)). [4Fe-4S] cluster contacts are provided by C61, C65, and C68. [2Fe-2S] cluster is bound by residues S105, C138, C198, and R268.

This sequence belongs to the radical SAM superfamily. Biotin synthase family. As to quaternary structure, homodimer. Requires [4Fe-4S] cluster as cofactor. The cofactor is [2Fe-2S] cluster.

It carries out the reaction (4R,5S)-dethiobiotin + (sulfur carrier)-SH + 2 reduced [2Fe-2S]-[ferredoxin] + 2 S-adenosyl-L-methionine = (sulfur carrier)-H + biotin + 2 5'-deoxyadenosine + 2 L-methionine + 2 oxidized [2Fe-2S]-[ferredoxin]. It participates in cofactor biosynthesis; biotin biosynthesis; biotin from 7,8-diaminononanoate: step 2/2. Catalyzes the conversion of dethiobiotin (DTB) to biotin by the insertion of a sulfur atom into dethiobiotin via a radical-based mechanism. The chain is Biotin synthase from Campylobacter hominis (strain ATCC BAA-381 / DSM 21671 / CCUG 45161 / LMG 19568 / NCTC 13146 / CH001A).